Reading from the N-terminus, the 1775-residue chain is Protein TIC 214 (1775 aa).

6 helical membrane-spanning segments follow: residues 19 to 39 (IINS…FSIG), 68 to 88 (FIAG…HLAL), 91 to 111 (PHTI…WNNH), 133 to 153 (VFLN…SSML), 176 to 196 (VGWL…LVWI), and 227 to 247 (IFSI…PSPI). The tract at residues 1491–1512 (KESAGQGERESDNEKKKNLESA) is disordered.

It belongs to the TIC214 family. In terms of assembly, part of the Tic complex.

The protein resides in the plastid. The protein localises to the chloroplast inner membrane. Functionally, involved in protein precursor import into chloroplasts. May be part of an intermediate translocation complex acting as a protein-conducting channel at the inner envelope. The sequence is that of Protein TIC 214 from Lobularia maritima (Sweet alyssum).